A 312-amino-acid chain; its full sequence is ECF RNA polymerase sigma factor SigJ (312 aa).

Residues 6–65 are sigma-70 factor domain-2; the sequence is FEALRQHLMSVAYRLTGTVADAEDIVQEAWLRWDSPDTVIADPRAWLTTVVSRLGLDKLR. Positions 29 to 32 match the Polymerase core binding motif; it reads DIVQ. A sigma-70 factor domain-4 region spans residues 107–155; it reads MVVLERLRPDQRVAFVLHDGFAVPFAEVAEVLGTSEAAARQLASRARKA. The H-T-H motif DNA-binding region spans 131-150; the sequence is FAEVAEVLGTSEAAARQLAS. A disordered region spans residues 293 to 312; the sequence is GSPLKERRAQPTGRGRHHRN.

The protein belongs to the sigma-70 factor family. ECF subfamily. As to quaternary structure, interacts transiently with the RNA polymerase catalytic core formed by RpoA, RpoB, RpoC and RpoZ (2 alpha, 1 beta, 1 beta' and 1 omega subunit) to form the RNA polymerase holoenzyme that can initiate transcription.

Functionally, sigma factors are initiation factors that promote the attachment of RNA polymerase to specific initiation sites and are then released. Extracytoplasmic function (ECF) sigma factors are held in an inactive form by an anti-sigma factor until released, although no anti-sigma factor is known for this protein. Regulates the promoter of SigI, may not be autoregulated. This is ECF RNA polymerase sigma factor SigJ (sigJ) from Mycobacterium tuberculosis (strain ATCC 25618 / H37Rv).